We begin with the raw amino-acid sequence, 338 residues long: Glyceraldehyde-3-phosphate dehydrogenase, cytosolic (338 aa).

Residues 14 to 15 (RI), Asp-36, and Arg-83 each bind NAD(+). Residues 154-156 (SCT), Thr-185, 214-215 (TG), and Arg-237 each bind D-glyceraldehyde 3-phosphate. The active-site Nucleophile is Cys-155. An NAD(+)-binding site is contributed by Asn-319.

This sequence belongs to the glyceraldehyde-3-phosphate dehydrogenase family. In terms of assembly, homotetramer.

It localises to the cytoplasm. It catalyses the reaction D-glyceraldehyde 3-phosphate + phosphate + NAD(+) = (2R)-3-phospho-glyceroyl phosphate + NADH + H(+). Its pathway is carbohydrate degradation; glycolysis; pyruvate from D-glyceraldehyde 3-phosphate: step 1/5. Functionally, key enzyme in glycolysis that catalyzes the first step of the pathway by converting D-glyceraldehyde 3-phosphate (G3P) into 3-phospho-D-glyceroyl phosphate. Essential for the maintenance of cellular ATP levels and carbohydrate metabolism. This is Glyceraldehyde-3-phosphate dehydrogenase, cytosolic (GAPC) from Ranunculus acris (Meadow buttercup).